The chain runs to 186 residues: ADP-ribosylation factor-like protein 8A (186 aa).

Positions 1-19 (MIALFNKLLDWFKALFWKE) form an intramembrane region, note=Mediates targeting to membranes. Residues 29–35 (QYSGKTT), 71–75 (DIGGQ), and 130–133 (NKRD) each bind GTP.

This sequence belongs to the small GTPase superfamily. Arf family. As to quaternary structure, interacts with PLEKHM1. When GTP-bound, interacts with RUFY3 and RUFY4, but not with RUFY1, nor RUFY2.

It is found in the late endosome membrane. The protein resides in the lysosome membrane. It localises to the cytoplasm. Its subcellular location is the cytoskeleton. The protein localises to the spindle. It is found in the cell projection. The protein resides in the axon. It localises to the synapse. In terms of biological role, plays a role in lysosomes motility. In neurons, mediates the anterograde axonal long-range transport of presynaptic lysosome-related vesicles required for presynaptic biogenesis and synaptic function. May play a role in chromosome segregation. In Mus musculus (Mouse), this protein is ADP-ribosylation factor-like protein 8A (Arl8a).